The chain runs to 151 residues: MTTNTHTLQIEEILELLPHRFPFLLVDRVLDFEEGRFLRAVKNVSVNEPFFQGHFPGKPIFPGVLILEAMAQATGILAFKSVGKLEPGELYYFAGIDEARFKRPVVPGDQMIMEVTFEKTRRGLTRFKGVALVDGKVVCEATMMCARSREA.

The active site involves His-54.

The protein belongs to the thioester dehydratase family. FabZ subfamily. In terms of assembly, oligomer. Post-translationally, the N-terminus is blocked.

It localises to the cytoplasm. It catalyses the reaction a (3R)-hydroxyacyl-[ACP] = a (2E)-enoyl-[ACP] + H2O. Its function is as follows. Involved in unsaturated fatty acids biosynthesis. Catalyzes the dehydration of short chain beta-hydroxyacyl-ACPs and long chain saturated and unsaturated beta-hydroxyacyl-ACPs. This Escherichia coli (strain SE11) protein is 3-hydroxyacyl-[acyl-carrier-protein] dehydratase FabZ.